The primary structure comprises 404 residues: Cysteine desulfurase IscS (404 aa).

Residues 75 to 76 (AT), asparagine 155, glutamine 183, and 203 to 205 (SGH) each bind pyridoxal 5'-phosphate. N6-(pyridoxal phosphate)lysine is present on lysine 206. Threonine 243 provides a ligand contact to pyridoxal 5'-phosphate. Cysteine 328 acts as the Cysteine persulfide intermediate in catalysis. A [2Fe-2S] cluster-binding site is contributed by cysteine 328.

This sequence belongs to the class-V pyridoxal-phosphate-dependent aminotransferase family. NifS/IscS subfamily. As to quaternary structure, homodimer. Forms a heterotetramer with IscU, interacts with other sulfur acceptors. Requires pyridoxal 5'-phosphate as cofactor.

The protein resides in the cytoplasm. The catalysed reaction is (sulfur carrier)-H + L-cysteine = (sulfur carrier)-SH + L-alanine. It functions in the pathway cofactor biosynthesis; iron-sulfur cluster biosynthesis. In terms of biological role, master enzyme that delivers sulfur to a number of partners involved in Fe-S cluster assembly, tRNA modification or cofactor biosynthesis. Catalyzes the removal of elemental sulfur atoms from cysteine to produce alanine. Functions as a sulfur delivery protein for Fe-S cluster synthesis onto IscU, an Fe-S scaffold assembly protein, as well as other S acceptor proteins. The sequence is that of Cysteine desulfurase IscS from Klebsiella pneumoniae subsp. pneumoniae (strain ATCC 700721 / MGH 78578).